Reading from the N-terminus, the 105-residue chain is MTLRDLINKLLGRETSSANTARERLQLVLAHDRVDMSSLTTDLLDKMRKEILDVVAKYVEIDFEEVAVSLETEDRMTALVANLPIKRTLTGEIEFKKNHDNPKKK.

This sequence belongs to the MinE family.

Functionally, prevents the cell division inhibition by proteins MinC and MinD at internal division sites while permitting inhibition at polar sites. This ensures cell division at the proper site by restricting the formation of a division septum at the midpoint of the long axis of the cell. This chain is Cell division topological specificity factor, found in Prochlorococcus marinus (strain MIT 9515).